Reading from the N-terminus, the 225-residue chain is Enolase-phosphatase E1 (225 aa).

This sequence belongs to the HAD-like hydrolase superfamily. MasA/MtnC family. In terms of assembly, monomer. Mg(2+) serves as cofactor.

It catalyses the reaction 5-methylsulfanyl-2,3-dioxopentyl phosphate + H2O = 1,2-dihydroxy-5-(methylsulfanyl)pent-1-en-3-one + phosphate. The protein operates within amino-acid biosynthesis; L-methionine biosynthesis via salvage pathway; L-methionine from S-methyl-5-thio-alpha-D-ribose 1-phosphate: step 3/6. It participates in amino-acid biosynthesis; L-methionine biosynthesis via salvage pathway; L-methionine from S-methyl-5-thio-alpha-D-ribose 1-phosphate: step 4/6. Bifunctional enzyme that catalyzes the enolization of 2,3-diketo-5-methylthiopentyl-1-phosphate (DK-MTP-1-P) into the intermediate 2-hydroxy-3-keto-5-methylthiopentenyl-1-phosphate (HK-MTPenyl-1-P), which is then dephosphorylated to form the acireductone 1,2-dihydroxy-3-keto-5-methylthiopentene (DHK-MTPene). The sequence is that of Enolase-phosphatase E1 from Shewanella halifaxensis (strain HAW-EB4).